The primary structure comprises 630 residues: tRNA uridine 5-carboxymethylaminomethyl modification enzyme MnmG (630 aa).

13–18 (GGGHAG) lines the FAD pocket. NAD(+) is bound at residue 273 to 287 (GPRYCPSIEDKVMRF).

The protein belongs to the MnmG family. Homodimer. Heterotetramer of two MnmE and two MnmG subunits. It depends on FAD as a cofactor.

The protein localises to the cytoplasm. NAD-binding protein involved in the addition of a carboxymethylaminomethyl (cmnm) group at the wobble position (U34) of certain tRNAs, forming tRNA-cmnm(5)s(2)U34. This Actinobacillus pleuropneumoniae serotype 7 (strain AP76) protein is tRNA uridine 5-carboxymethylaminomethyl modification enzyme MnmG.